We begin with the raw amino-acid sequence, 321 residues long: Beta-porphyranase B (321 aa).

Residues 1–20 form the signal peptide; it reads MRKTVLYLSAASLFLSSYTL. The GH16 domain maps to 31–319; sequence EHIKNLPEAP…WVRAYKLVPI (289 aa). 5 residues coordinate substrate: W72, R76, E173, E178, and E284. E173 (nucleophile) is an active-site residue. E178 (proton donor) is an active-site residue.

The protein belongs to the glycosyl hydrolase 16 family.

The catalysed reaction is Hydrolysis of beta-D-galactopyranose-(1-&gt;4)-alpha-L-galactopyranose-6-sulfate linkages in porphyran.. Its function is as follows. Cleaves the sulfated polysaccharide porphyran at the (1-&gt;4) linkages between beta-D-galactopyranose and alpha-L-galactopyranose-6-sulfate, forming mostly the disaccharide alpha-L-galactopyranose-6-sulfate-(1-&gt;3)-beta-D-galactose. Some longer oligosaccharides of even number of residues are also observed. Inactive on the non-sulfated agarose portion of the porphyran backbone. The sequence is that of Beta-porphyranase B from Phocaeicola plebeius (strain DSM 17135 / JCM 12973 / CCUG 54634 / M2) (Bacteroides plebeius).